The following is a 599-amino-acid chain: Elongation factor 4 (599 aa).

The region spanning 5–187 (SHIRNFSIIA…HLVRVIPPPQ (183 aa)) is the tr-type G domain. Residues 17-22 (DHGKST) and 134-137 (NKMD) contribute to the GTP site.

It belongs to the TRAFAC class translation factor GTPase superfamily. Classic translation factor GTPase family. LepA subfamily.

Its subcellular location is the cell inner membrane. The enzyme catalyses GTP + H2O = GDP + phosphate + H(+). Required for accurate and efficient protein synthesis under certain stress conditions. May act as a fidelity factor of the translation reaction, by catalyzing a one-codon backward translocation of tRNAs on improperly translocated ribosomes. Back-translocation proceeds from a post-translocation (POST) complex to a pre-translocation (PRE) complex, thus giving elongation factor G a second chance to translocate the tRNAs correctly. Binds to ribosomes in a GTP-dependent manner. This chain is Elongation factor 4, found in Azotobacter vinelandii (strain DJ / ATCC BAA-1303).